The sequence spans 328 residues: Cytochrome c biogenesis protein CcsA (328 aa).

A run of 8 helical transmembrane segments spans residues 13–33 (ISFS…LVNL), 46–66 (GIII…IYSG), 73–93 (LYES…VSYF), 101–121 (LNTI…SGLL), 146–166 (MILG…LLVI), 234–254 (IISL…VWAN), 263–283 (WDPK…YLHI), and 295–315 (AIVA…VNLL).

This sequence belongs to the CcmF/CycK/Ccl1/NrfE/CcsA family. As to quaternary structure, may interact with Ccs1.

Its subcellular location is the plastid. The protein localises to the chloroplast thylakoid membrane. Required during biogenesis of c-type cytochromes (cytochrome c6 and cytochrome f) at the step of heme attachment. The protein is Cytochrome c biogenesis protein CcsA of Arabidopsis thaliana (Mouse-ear cress).